A 102-amino-acid chain; its full sequence is Small ribosomal subunit protein uS10 (102 aa).

The protein belongs to the universal ribosomal protein uS10 family. As to quaternary structure, part of the 30S ribosomal subunit.

Its function is as follows. Involved in the binding of tRNA to the ribosomes. The polypeptide is Small ribosomal subunit protein uS10 (Geobacter metallireducens (strain ATCC 53774 / DSM 7210 / GS-15)).